The following is a 384-amino-acid chain: Queuine tRNA-ribosyltransferase (384 aa).

Aspartate 92 serves as the catalytic Proton acceptor. Substrate contacts are provided by residues 92-96 (DSGGF), aspartate 146, glutamine 190, and glycine 217. An RNA binding region spans residues 248-254 (GVGRPED). Aspartate 267 serves as the catalytic Nucleophile. The interval 272–276 (TRHAR) is RNA binding; important for wobble base 34 recognition. 4 residues coordinate Zn(2+): cysteine 305, cysteine 307, cysteine 310, and histidine 337.

This sequence belongs to the queuine tRNA-ribosyltransferase family. Homodimer. Within each dimer, one monomer is responsible for RNA recognition and catalysis, while the other monomer binds to the replacement base PreQ1. It depends on Zn(2+) as a cofactor.

The enzyme catalyses 7-aminomethyl-7-carbaguanine + guanosine(34) in tRNA = 7-aminomethyl-7-carbaguanosine(34) in tRNA + guanine. Its pathway is tRNA modification; tRNA-queuosine biosynthesis. Functionally, catalyzes the base-exchange of a guanine (G) residue with the queuine precursor 7-aminomethyl-7-deazaguanine (PreQ1) at position 34 (anticodon wobble position) in tRNAs with GU(N) anticodons (tRNA-Asp, -Asn, -His and -Tyr). Catalysis occurs through a double-displacement mechanism. The nucleophile active site attacks the C1' of nucleotide 34 to detach the guanine base from the RNA, forming a covalent enzyme-RNA intermediate. The proton acceptor active site deprotonates the incoming PreQ1, allowing a nucleophilic attack on the C1' of the ribose to form the product. After dissociation, two additional enzymatic reactions on the tRNA convert PreQ1 to queuine (Q), resulting in the hypermodified nucleoside queuosine (7-(((4,5-cis-dihydroxy-2-cyclopenten-1-yl)amino)methyl)-7-deazaguanosine). The sequence is that of Queuine tRNA-ribosyltransferase from Xylella fastidiosa (strain 9a5c).